The primary structure comprises 85 residues: Putative regulatory protein THEYE_A0405 (85 aa).

It belongs to the RemA family.

The polypeptide is Putative regulatory protein THEYE_A0405 (Thermodesulfovibrio yellowstonii (strain ATCC 51303 / DSM 11347 / YP87)).